Reading from the N-terminus, the 185-residue chain is Ribose 1,5-bisphosphate phosphokinase PhnN (185 aa).

ATP is bound at residue 13-20 (GPSGAGKD).

Belongs to the ribose 1,5-bisphosphokinase family.

It carries out the reaction alpha-D-ribose 1,5-bisphosphate + ATP = 5-phospho-alpha-D-ribose 1-diphosphate + ADP. Its pathway is metabolic intermediate biosynthesis; 5-phospho-alpha-D-ribose 1-diphosphate biosynthesis; 5-phospho-alpha-D-ribose 1-diphosphate from D-ribose 5-phosphate (route II): step 3/3. Functionally, catalyzes the phosphorylation of ribose 1,5-bisphosphate to 5-phospho-D-ribosyl alpha-1-diphosphate (PRPP). This is Ribose 1,5-bisphosphate phosphokinase PhnN from Chromobacterium violaceum (strain ATCC 12472 / DSM 30191 / JCM 1249 / CCUG 213 / NBRC 12614 / NCIMB 9131 / NCTC 9757 / MK).